The chain runs to 595 residues: 3-hydroxy-3-methylglutaryl-coenzyme A reductase 2 (595 aa).

Asn-35 carries an N-linked (GlcNAc...) asparagine glycan. 2 consecutive transmembrane segments (helical) span residues 48–68 (LPLY…MYFL) and 92–112 (AIVS…IGFV). The interval 113-183 (QTFVSRGNND…SPLITPASSE (71 aa)) is linker. An N-linked (GlcNAc...) asparagine glycan is attached at Asn-121. The tract at residues 184 to 595 (EDEEIINSVV…KYNRSTKASS (412 aa)) is catalytic. The active-site Charge relay system is the Glu-278. An N-linked (GlcNAc...) asparagine glycan is attached at Asn-342. Catalysis depends on Lys-410, which acts as the Charge relay system. N-linked (GlcNAc...) asparagine glycosylation occurs at Asn-455. Residue Asp-486 is the Charge relay system of the active site. The active-site Proton donor is the His-584. N-linked (GlcNAc...) asparagine glycosylation occurs at Asn-588.

The protein belongs to the HMG-CoA reductase family. In terms of tissue distribution, expressed in young flowers and in mature sepals and ovaries.

The protein localises to the endoplasmic reticulum membrane. It carries out the reaction (R)-mevalonate + 2 NADP(+) + CoA = (3S)-3-hydroxy-3-methylglutaryl-CoA + 2 NADPH + 2 H(+). It functions in the pathway metabolic intermediate biosynthesis; (R)-mevalonate biosynthesis; (R)-mevalonate from acetyl-CoA: step 3/3. Functionally, catalyzes the synthesis of mevalonate. The specific precursor of all isoprenoid compounds present in plants. This chain is 3-hydroxy-3-methylglutaryl-coenzyme A reductase 2 (HMG2), found in Solanum tuberosum (Potato).